We begin with the raw amino-acid sequence, 26 residues long: Superoxide dismutase [Cu-Zn] (26 aa).

A lipid anchor (S-palmitoyl cysteine) is attached at cysteine 7.

The protein belongs to the Cu-Zn superoxide dismutase family. Homotrimer. It depends on Cu cation as a cofactor. Zn(2+) serves as cofactor.

The protein localises to the cytoplasm. It is found in the nucleus. The enzyme catalyses 2 superoxide + 2 H(+) = H2O2 + O2. Functionally, destroys radicals which are normally produced within the cells and which are toxic to biological systems. The chain is Superoxide dismutase [Cu-Zn] (sod1) from Paralichthys olivaceus (Bastard halibut).